A 137-amino-acid chain; its full sequence is Small ribosomal subunit protein uS12 (137 aa).

The interval 1-57 is disordered; that stretch reads MPTINQLVRKPRKSKVEKSKSPALNVGYNSRKKVQTNVSSPQKRGVATRVGTMTPKK. Aspartate 102 carries the 3-methylthioaspartic acid modification.

It belongs to the universal ribosomal protein uS12 family. Part of the 30S ribosomal subunit. Contacts proteins S8 and S17. May interact with IF1 in the 30S initiation complex.

Functionally, with S4 and S5 plays an important role in translational accuracy. In terms of biological role, interacts with and stabilizes bases of the 16S rRNA that are involved in tRNA selection in the A site and with the mRNA backbone. Located at the interface of the 30S and 50S subunits, it traverses the body of the 30S subunit contacting proteins on the other side and probably holding the rRNA structure together. The combined cluster of proteins S8, S12 and S17 appears to hold together the shoulder and platform of the 30S subunit. The polypeptide is Small ribosomal subunit protein uS12 (Streptococcus suis (strain 98HAH33)).